Here is a 202-residue protein sequence, read N- to C-terminus: MTDALENLRQHLSDELGATLRTAHLDRGELTVELSREGFPAACLLLRDDVACAFDLLVDVCGVDYSAYGEGLWEGPRFAVVYHLLSLKHRQRLRVRIFADDDLPIVPSVVEVWAAANWFEREAFDLYGILFDGHPDLRRILTDYGFVGHPFRKDFPLVGTVEMRYDADQGRVVYEPTRTEERVVVPRIIREAGEGRYNARNQ.

This sequence belongs to the complex I 30 kDa subunit family. In terms of assembly, NDH-1 is composed of 14 different subunits. Subunits NuoB, C, D, E, F, and G constitute the peripheral sector of the complex.

Its subcellular location is the cell inner membrane. It catalyses the reaction a quinone + NADH + 5 H(+)(in) = a quinol + NAD(+) + 4 H(+)(out). In terms of biological role, NDH-1 shuttles electrons from NADH, via FMN and iron-sulfur (Fe-S) centers, to quinones in the respiratory chain. The immediate electron acceptor for the enzyme in this species is believed to be ubiquinone. Couples the redox reaction to proton translocation (for every two electrons transferred, four hydrogen ions are translocated across the cytoplasmic membrane), and thus conserves the redox energy in a proton gradient. In Acidithiobacillus ferrooxidans (strain ATCC 23270 / DSM 14882 / CIP 104768 / NCIMB 8455) (Ferrobacillus ferrooxidans (strain ATCC 23270)), this protein is NADH-quinone oxidoreductase subunit C.